Consider the following 43-residue polypeptide: Protein PsbN (43 aa).

The helical transmembrane segment at 5–27 (TLVAIFISGSLVSFTGYALYTAF) threads the bilayer.

Belongs to the PsbN family.

The protein resides in the plastid. It is found in the chloroplast thylakoid membrane. Its function is as follows. May play a role in photosystem I and II biogenesis. The sequence is that of Protein PsbN from Nelumbo lutea (American lotus).